A 199-amino-acid chain; its full sequence is Protein GrpE (199 aa).

Positions 1–10 (MTNQTEKEQV) are enriched in basic and acidic residues. The interval 1 to 44 (MTNQTEKEQVEQDVSQATELAQEAQEAQTQDVEPELQQNNEIDP) is disordered. A compositionally biased stretch (low complexity) spans 16 to 30 (QATELAQEAQEAQTQ).

This sequence belongs to the GrpE family. As to quaternary structure, homodimer.

It is found in the cytoplasm. Functionally, participates actively in the response to hyperosmotic and heat shock by preventing the aggregation of stress-denatured proteins, in association with DnaK and GrpE. It is the nucleotide exchange factor for DnaK and may function as a thermosensor. Unfolded proteins bind initially to DnaJ; upon interaction with the DnaJ-bound protein, DnaK hydrolyzes its bound ATP, resulting in the formation of a stable complex. GrpE releases ADP from DnaK; ATP binding to DnaK triggers the release of the substrate protein, thus completing the reaction cycle. Several rounds of ATP-dependent interactions between DnaJ, DnaK and GrpE are required for fully efficient folding. This chain is Protein GrpE, found in Glaesserella parasuis serovar 5 (strain SH0165) (Haemophilus parasuis).